We begin with the raw amino-acid sequence, 542 residues long: Putative CTP synthase (542 aa).

The amidoligase domain stretch occupies residues 1-277 (MEIDLMKHIQ…HKTILDFFSL (277 aa)). CTP is bound at residue Ser23. Position 23 (Ser23) interacts with UTP. ATP contacts are provided by residues 24–29 (SLGKGV) and Asp81. Positions 81 and 151 each coordinate Mg(2+). Residues 158–160 (DIE), 198–203 (KTKPTQ), and Lys234 each bind CTP. UTP is bound by residues 198 to 203 (KTKPTQ) and Lys234. In terms of domain architecture, Glutamine amidotransferase type-1 spans 310 to 542 (YVELPDAYKS…LKMSLKIKES (233 aa)). Glu517 is an active-site residue.

The protein belongs to the CTP synthase family. Homotetramer.

It catalyses the reaction UTP + L-glutamine + ATP + H2O = CTP + L-glutamate + ADP + phosphate + 2 H(+). The enzyme catalyses L-glutamine + H2O = L-glutamate + NH4(+). It carries out the reaction UTP + NH4(+) + ATP = CTP + ADP + phosphate + 2 H(+). It functions in the pathway pyrimidine metabolism; CTP biosynthesis via de novo pathway; CTP from UDP: step 2/2. With respect to regulation, allosterically activated by GTP, when glutamine is the substrate; GTP has no effect on the reaction when ammonia is the substrate. The allosteric effector GTP functions by stabilizing the protein conformation that binds the tetrahedral intermediate(s) formed during glutamine hydrolysis. Inhibited by the product CTP, via allosteric rather than competitive inhibition. Catalyzes the ATP-dependent amination of UTP to CTP with either L-glutamine or ammonia as the source of nitrogen. Regulates intracellular CTP levels through interactions with the four ribonucleotide triphosphates. The chain is Putative CTP synthase from Ureaplasma parvum serovar 3 (strain ATCC 700970).